We begin with the raw amino-acid sequence, 2839 residues long: PDZ domain-containing protein 2 (2839 aa).

Positions 85-182 constitute a PDZ 1 domain; sequence LSFGNIPVFG…LIMLRRFKHK (98 aa). Residues 185 to 318 form a disordered region; it reads STYNGNSSNS…RFSKGGKTDF (134 aa). The span at 189-202 shows a compositional bias: low complexity; that stretch reads GNSSNSSEPGETPT. The segment covering 280-296 has biased composition (basic and acidic residues); that stretch reads HLERSEVDRGTEHRIPK. One can recognise a PDZ 2 domain in the interval 334–419; the sequence is KMELLKESDG…MVQLVVASKE (86 aa). Residues 437–447 show a composition bias toward polar residues; the sequence is TSSVEDVSSWT. The segment at 437 to 501 is disordered; that stretch reads TSSVEDVSSW…PKQGSNKIKL (65 aa). The span at 448–461 shows a compositional bias: acidic residues; that stretch reads DNEDQEADGEEDEG. Residue Ser568 is modified to Phosphoserine. A PDZ 3 domain is found at 586-672; sequence IIGLYKEKGK…GLFVLTVRTK (87 aa). Residues 678-697 are compositionally biased toward polar residues; the sequence is LTPCSTPTHMSRSASPNFNT. The segment at 678-723 is disordered; sequence LTPCSTPTHMSRSASPNFNTSGGASAGGSDEGSSSSLGRKTPGPKD. The PDZ 4 domain maps to 728 to 813; it reads EVTLNKEPRV…GPVRLVIGRH (86 aa). Polar residues-rich tracts occupy residues 832–843 and 894–908; these read YQESKEANSSPG and GCST…PSTS. Disordered regions lie at residues 832-852 and 879-921; these read YQES…KSPS and DFMV…ANSL. Phosphoserine occurs at positions 944 and 948. Disordered stretches follow at residues 984 to 1033, 1062 to 1155, 1216 to 1493, 1530 to 1620, 1638 to 1712, 1809 to 1865, 1892 to 1976, 2009 to 2079, 2135 to 2166, 2178 to 2211, 2232 to 2251, 2353 to 2383, 2426 to 2481, and 2516 to 2564; these read SLPG…ISAP, SAEA…PCDL, KAAS…GAPA, FHED…LPTQ, PRES…SPLS, NQGT…DLSK, GKAK…SVSD, PDRG…GNIM, QVAE…SMAK, IRKA…GEDH, HFGR…DSQV, AKSG…GSLG, SRQN…SRSK, and ITPR…GEAA. Over residues 1012–1022 the composition is skewed to basic and acidic residues; sequence MDVHNQEERPR. 7 stretches are compositionally biased toward polar residues: residues 1092–1111, 1138–1147, 1221–1236, 1250–1269, 1305–1315, 1384–1401, and 1440–1453; these read RTDT…QQKS, SGSQTVNLTG, LGQQ…SDLI, SKTS…SQPA, TRSASETSTPH, SVSS…PSTD, and RSPS…GSQE. Low complexity predominate over residues 1662–1672; it reads SSQPSSLLEMS. The span at 1698–1711 shows a compositional bias: polar residues; it reads EVTSASSAMENSPL. Phosphoserine is present on Ser1850. A compositionally biased stretch (polar residues) spans 1919 to 1931; sequence SPQTSHKTLSKAV. A compositionally biased stretch (basic and acidic residues) spans 1936–1945; it reads HVADHEDPDR. Positions 2139 to 2152 are enriched in low complexity; sequence SSTSHPSSLPSHAS. A compositionally biased stretch (low complexity) spans 2370–2383; the sequence is GRRSSGSIVSGSLG. 3 stretches are compositionally biased toward polar residues: residues 2426–2437, 2470–2480, and 2546–2559; these read SRQNPPETSSKG, RHTQPSPVSRS, and PKTS…SASD. Residues 2622–2706 enclose the PDZ 5 domain; sequence FIVLNRKEGS…HKDALVVIKK (85 aa). Residues 2709–2729 are disordered; that stretch reads DQPRPSARQEPPTANGKGLLS. Residues 2750-2835 form the PDZ 6 domain; sequence CVEVLKTSAG…GPVQLLIRKH (86 aa).

As to quaternary structure, interacts with SCN10A, CTNND2 and PKP4. A secreted form is produced by caspase-mediated proteolytic cleavage. In terms of tissue distribution, isoform 2 is expressed (at protein level) in prostate and many prostate tumors.

Its subcellular location is the nucleus. The protein localises to the cytoplasm. It is found in the endoplasmic reticulum. It localises to the secreted. This chain is PDZ domain-containing protein 2 (PDZD2), found in Homo sapiens (Human).